The following is a 79-amino-acid chain: Small ribosomal subunit protein bS18 (79 aa).

Belongs to the bacterial ribosomal protein bS18 family. In terms of assembly, part of the 30S ribosomal subunit. Forms a tight heterodimer with protein bS6.

Its function is as follows. Binds as a heterodimer with protein bS6 to the central domain of the 16S rRNA, where it helps stabilize the platform of the 30S subunit. In Streptococcus pyogenes serotype M49 (strain NZ131), this protein is Small ribosomal subunit protein bS18.